A 338-amino-acid polypeptide reads, in one-letter code: Heat-inducible transcription repressor HrcA (338 aa).

This sequence belongs to the HrcA family.

Its function is as follows. Negative regulator of class I heat shock genes (grpE-dnaK-dnaJ and groELS operons). Prevents heat-shock induction of these operons. The chain is Heat-inducible transcription repressor HrcA from Bacillus mycoides (strain KBAB4) (Bacillus weihenstephanensis).